A 493-amino-acid polypeptide reads, in one-letter code: Probable cytosol aminopeptidase (493 aa).

Positions 262 and 267 each coordinate Mn(2+). Lys274 is a catalytic residue. The Mn(2+) site is built by Asp286, Asp345, and Glu347. The active site involves Arg349.

The protein belongs to the peptidase M17 family. It depends on Mn(2+) as a cofactor.

The protein localises to the cytoplasm. It catalyses the reaction Release of an N-terminal amino acid, Xaa-|-Yaa-, in which Xaa is preferably Leu, but may be other amino acids including Pro although not Arg or Lys, and Yaa may be Pro. Amino acid amides and methyl esters are also readily hydrolyzed, but rates on arylamides are exceedingly low.. The enzyme catalyses Release of an N-terminal amino acid, preferentially leucine, but not glutamic or aspartic acids.. Presumably involved in the processing and regular turnover of intracellular proteins. Catalyzes the removal of unsubstituted N-terminal amino acids from various peptides. This chain is Probable cytosol aminopeptidase, found in Cyanothece sp. (strain PCC 7425 / ATCC 29141).